The following is a 285-amino-acid chain: Transcription factor JAMYB (285 aa).

HTH myb-type domains are found at residues 26 to 78 (SAEL…LNYL) and 79 to 133 (RPDV…QKHA). DNA-binding regions (H-T-H motif) lie at residues 54-78 (WNALARAAGLKRTGKSCRLRWLNYL) and 106-129 (WSKIAQHLPGRTDNEIKNYWRTRV).

It localises to the nucleus. Functionally, probable transcription factor that may be involved in the jasmonate-dependent defense responses to the rice blast fungus Magnaporthe oryzae. Does not seem to function in the salicylic acid-dependent signaling pathway. This chain is Transcription factor JAMYB, found in Oryza sativa subsp. japonica (Rice).